The sequence spans 118 residues: UPF0342 protein ABC1519 (118 aa).

Belongs to the UPF0342 family.

This Shouchella clausii (strain KSM-K16) (Alkalihalobacillus clausii) protein is UPF0342 protein ABC1519.